We begin with the raw amino-acid sequence, 85 residues long: METVLSFSAIAVAIIVGLCALGTAVGFAVLGGKFLEGAARQPEMAPMLQVKMFIIAGLLDAVPMIGIVIALLFTFANPFVGQLAG.

The next 2 helical transmembrane spans lie at 10–30 (IAVAIIVGLCALGTAVGFAVL) and 53–73 (FIIAGLLDAVPMIGIVIALLF).

This sequence belongs to the ATPase C chain family. In terms of assembly, F-type ATPases have 2 components, F(1) - the catalytic core - and F(0) - the membrane proton channel. F(1) has five subunits: alpha(3), beta(3), gamma(1), delta(1), epsilon(1). F(0) has three main subunits: a(1), b(2) and c(10-14). The alpha and beta chains form an alternating ring which encloses part of the gamma chain. F(1) is attached to F(0) by a central stalk formed by the gamma and epsilon chains, while a peripheral stalk is formed by the delta and b chains.

Its subcellular location is the cell inner membrane. Functionally, f(1)F(0) ATP synthase produces ATP from ADP in the presence of a proton or sodium gradient. F-type ATPases consist of two structural domains, F(1) containing the extramembraneous catalytic core and F(0) containing the membrane proton channel, linked together by a central stalk and a peripheral stalk. During catalysis, ATP synthesis in the catalytic domain of F(1) is coupled via a rotary mechanism of the central stalk subunits to proton translocation. In terms of biological role, key component of the F(0) channel; it plays a direct role in translocation across the membrane. A homomeric c-ring of between 10-14 subunits forms the central stalk rotor element with the F(1) delta and epsilon subunits. The protein is ATP synthase subunit c of Vibrio vulnificus (strain CMCP6).